The primary structure comprises 327 residues: GTP 3',8-cyclase (327 aa).

The Radical SAM core domain maps to H7–A232. Residue R16 participates in GTP binding. 2 residues coordinate [4Fe-4S] cluster: C23 and C27. Residue Y29 coordinates S-adenosyl-L-methionine. C30 is a [4Fe-4S] cluster binding site. Position 66 (R66) interacts with GTP. G70 serves as a coordination point for S-adenosyl-L-methionine. T97 contacts GTP. S-adenosyl-L-methionine is bound at residue S121. Residue K158 participates in GTP binding. M192 provides a ligand contact to S-adenosyl-L-methionine. Residues C255 and C258 each coordinate [4Fe-4S] cluster. R260–R262 is a GTP binding site. C272 is a binding site for [4Fe-4S] cluster.

It belongs to the radical SAM superfamily. MoaA family. Monomer and homodimer. [4Fe-4S] cluster is required as a cofactor.

It carries out the reaction GTP + AH2 + S-adenosyl-L-methionine = (8S)-3',8-cyclo-7,8-dihydroguanosine 5'-triphosphate + 5'-deoxyadenosine + L-methionine + A + H(+). Its pathway is cofactor biosynthesis; molybdopterin biosynthesis. Catalyzes the cyclization of GTP to (8S)-3',8-cyclo-7,8-dihydroguanosine 5'-triphosphate. This chain is GTP 3',8-cyclase, found in Synechococcus elongatus (strain ATCC 33912 / PCC 7942 / FACHB-805) (Anacystis nidulans R2).